A 152-amino-acid chain; its full sequence is MTDTVDIPIIAKRLPVYAHPGDAGADLCAAEAVTLEPGERHTVPTGVSIALPEGYAAFVVPRSGLAMKHGLTIVNAPGTVDAGYRGEIRVTVLNTDRSMPYDIAVGDRIAQLIVMPVTRAVFVPVDTLPDSHRGTAGFGSSGYTVTQAGEHA.

Residues 62-64 (RSG), asparagine 75, and 79-81 (TVD) contribute to the substrate site.

The protein belongs to the dUTPase family. It depends on Mg(2+) as a cofactor.

It carries out the reaction dUTP + H2O = dUMP + diphosphate + H(+). It functions in the pathway pyrimidine metabolism; dUMP biosynthesis; dUMP from dCTP (dUTP route): step 2/2. This enzyme is involved in nucleotide metabolism: it produces dUMP, the immediate precursor of thymidine nucleotides and it decreases the intracellular concentration of dUTP so that uracil cannot be incorporated into DNA. The sequence is that of Deoxyuridine 5'-triphosphate nucleotidohydrolase from Leifsonia xyli subsp. xyli (strain CTCB07).